The chain runs to 519 residues: Mannosyl-oligosaccharide alpha-1,2-mannosidase (519 aa).

Positions 1 to 22 (MKGSPVLAVCAAALTLIPSVVA) are cleaved as a signal peptide. N-linked (GlcNAc...) asparagine glycosylation is present at N187. C337 and C366 form a disulfide bridge. E380 serves as the catalytic Proton donor. The N-linked (GlcNAc...) asparagine glycan is linked to N443. Residue T507 participates in Ca(2+) binding.

The protein belongs to the glycosyl hydrolase 47 family. Monomer. The cofactor is Ca(2+). Mg(2+) serves as cofactor.

It localises to the secreted. The enzyme catalyses N(4)-(alpha-D-Man-(1-&gt;2)-alpha-D-Man-(1-&gt;2)-alpha-D-Man-(1-&gt;3)-[alpha-D-Man-(1-&gt;2)-alpha-D-Man-(1-&gt;3)-[alpha-D-Man-(1-&gt;2)-alpha-D-Man-(1-&gt;6)]-alpha-D-Man-(1-&gt;6)]-beta-D-Man-(1-&gt;4)-beta-D-GlcNAc-(1-&gt;4)-beta-D-GlcNAc)-L-asparaginyl-[protein] (N-glucan mannose isomer 9A1,2,3B1,2,3) + 4 H2O = N(4)-(alpha-D-Man-(1-&gt;3)-[alpha-D-Man-(1-&gt;3)-[alpha-D-Man-(1-&gt;6)]-alpha-D-Man-(1-&gt;6)]-beta-D-Man-(1-&gt;4)-beta-D-GlcNAc-(1-&gt;4)-beta-D-GlcNAc)-L-asparaginyl-[protein] (N-glucan mannose isomer 5A1,2) + 4 beta-D-mannose. It catalyses the reaction N(4)-(alpha-D-Man-(1-&gt;2)-alpha-D-Man-(1-&gt;2)-alpha-D-Man-(1-&gt;3)-[alpha-D-Man-(1-&gt;3)-[alpha-D-Man-(1-&gt;2)-alpha-D-Man-(1-&gt;6)]-alpha-D-Man-(1-&gt;6)]-beta-D-Man-(1-&gt;4)-beta-D-GlcNAc-(1-&gt;4)-beta-D-GlcNAc)-L-asparaginyl-[protein] (N-glucan mannose isomer 8A1,2,3B1,3) + 3 H2O = N(4)-(alpha-D-Man-(1-&gt;3)-[alpha-D-Man-(1-&gt;3)-[alpha-D-Man-(1-&gt;6)]-alpha-D-Man-(1-&gt;6)]-beta-D-Man-(1-&gt;4)-beta-D-GlcNAc-(1-&gt;4)-beta-D-GlcNAc)-L-asparaginyl-[protein] (N-glucan mannose isomer 5A1,2) + 3 beta-D-mannose. Its pathway is protein modification; protein glycosylation. In terms of biological role, alpha-mannosidase involved in the maturation of Asn-linked oligosaccharides. Progressively trims alpha-1,2-linked mannose residues from Man(9)GlcNAc(2) to produce Man(5)GlcNAc(2). The protein is Mannosyl-oligosaccharide alpha-1,2-mannosidase of Coccidioides posadasii (strain RMSCC 757 / Silveira) (Valley fever fungus).